The chain runs to 282 residues: Acetylglutamate kinase (282 aa).

Substrate-binding positions include 62 to 63, Arg-84, and Asn-178; that span reads GG.

This sequence belongs to the acetylglutamate kinase family. ArgB subfamily.

Its subcellular location is the cytoplasm. It catalyses the reaction N-acetyl-L-glutamate + ATP = N-acetyl-L-glutamyl 5-phosphate + ADP. It functions in the pathway amino-acid biosynthesis; L-arginine biosynthesis; N(2)-acetyl-L-ornithine from L-glutamate: step 2/4. Its function is as follows. Catalyzes the ATP-dependent phosphorylation of N-acetyl-L-glutamate. This Thermotoga sp. (strain RQ2) protein is Acetylglutamate kinase.